A 314-amino-acid chain; its full sequence is Acetaldehyde dehydrogenase 3 (314 aa).

Residue Cys-132 is the Acyl-thioester intermediate of the active site. Residues 163-171 and Asn-291 contribute to the NAD(+) site; that span reads SAGPGTRAN.

Belongs to the acetaldehyde dehydrogenase family.

The catalysed reaction is acetaldehyde + NAD(+) + CoA = acetyl-CoA + NADH + H(+). The chain is Acetaldehyde dehydrogenase 3 from Dechloromonas aromatica (strain RCB).